The sequence spans 405 residues: Potassium channel subfamily K member 13 (405 aa).

Residues 1 to 19 (MAGRGCSCSPGHLNEDNAR) are Cytoplasmic-facing. Residues 20–40 (FLLLAGLILLYLLGGAAVFSA) form a helical membrane-spanning segment. N59 and N65 each carry an N-linked (GlcNAc...) asparagine glycan. Residues 95–115 (WDFTGAFYFVGTVVTTIGFGM) constitute an intramembrane region (pore-forming). The K(+) site is built by T110, I111, and G112. Positions 110–115 (TIGFGM) are selectivity filter 1. Residues 125-145 (VFLIFYGLIGCASTILFFNLF) form a helical membrane-spanning segment. Over 146-193 (LERLITVIAYVMRTCHHQQLRRRGTVARDNRKAPRKGEADSLAGWKPS) the chain is Cytoplasmic. The helical transmembrane segment at 194-214 (VYYVMLILCLASVAISCGASA) threads the bilayer. The segment at residues 224-244 (YFDSVYFCFVASSTIGFGDLV) is an intramembrane region (pore-forming). K(+) is bound by residues T237, I238, G239, and F240. The selectivity filter 2 stretch occupies residues 237-242 (TIGFGD). The helical transmembrane segment at 263 to 283 (FFILMGVCCIYSMFNVISILI) threads the bilayer. Topologically, residues 284 to 405 (KQTVNWILRK…NRLAETSGDR (122 aa)) are cytoplasmic.

It belongs to the two pore domain potassium channel (TC 1.A.1.8) family. In terms of assembly, homodimer. Heterodimer with KCNK12. As to expression, ubiquitous. In brain expression is rather low and restricted to the olfactory bulb and tubercle, to the ventromedial hypothalamic nucleus, lateral septal nucleus dorsal, lateral mammillary nucleus, lateral parabrachial nuclei, reticular nucleus and reunions nuclei.

It localises to the cell membrane. The enzyme catalyses K(+)(in) = K(+)(out). Its activity is regulated as follows. The channel currents are activated by arachidonic acid, inhibited by volatile anesthetic halothane, partially inhibited by Ba(2+) ions and only weakly inhibited by extracellular acidification to pH 6. In terms of biological role, k(+) channel that conducts outward rectifying tonic currents potentiated by purinergic signals. Homo- and heterodimerizes to form functional channels with distinct regulatory and gating properties. Contributes most of K(+) currents at the plasma membrane of resting microglia. Maintains a depolarized membrane potential required for proper ramified microglia morphology and phagocytosis, selectively mediating microglial pruning of presynaptic compartments at hippocampal excitatory synapses. Upon local release of ATP caused by neuronal injury or infection, it is potentiated by P2RY12 and P2RX7 receptor signaling and contributes to ATP-triggered K(+) efflux underlying microglial NLRP3 inflammasome assembly and IL1B release. The chain is Potassium channel subfamily K member 13 from Rattus norvegicus (Rat).